The sequence spans 356 residues: Histidinol-phosphate aminotransferase (356 aa).

The residue at position 214 (Lys-214) is an N6-(pyridoxal phosphate)lysine.

It belongs to the class-II pyridoxal-phosphate-dependent aminotransferase family. Histidinol-phosphate aminotransferase subfamily. Homodimer. It depends on pyridoxal 5'-phosphate as a cofactor.

It catalyses the reaction L-histidinol phosphate + 2-oxoglutarate = 3-(imidazol-4-yl)-2-oxopropyl phosphate + L-glutamate. The protein operates within amino-acid biosynthesis; L-histidine biosynthesis; L-histidine from 5-phospho-alpha-D-ribose 1-diphosphate: step 7/9. The protein is Histidinol-phosphate aminotransferase of Shigella dysenteriae serotype 1 (strain Sd197).